Here is a 310-residue protein sequence, read N- to C-terminus: tRNA pseudouridine synthase B (310 aa).

The active-site Nucleophile is D47.

The protein belongs to the pseudouridine synthase TruB family. Type 1 subfamily.

It carries out the reaction uridine(55) in tRNA = pseudouridine(55) in tRNA. Functionally, responsible for synthesis of pseudouridine from uracil-55 in the psi GC loop of transfer RNAs. The protein is tRNA pseudouridine synthase B of Caulobacter sp. (strain K31).